A 553-amino-acid polypeptide reads, in one-letter code: Dihydrolipoyllysine-residue acetyltransferase component of pyruvate dehydrogenase complex (553 aa).

In terms of domain architecture, Lipoyl-binding 1 spans 4–78; it reads AIEIKVPDIG…SEGSVLVMLE (75 aa). N6-lipoyllysine is present on lysine 44. Residues 97–118 are disordered; that stretch reads AAAAPAPAPAPAAAPAAAPAAG. Residues 122–196 enclose the Lipoyl-binding 2 domain; that stretch reads TIEVKVPDIG…AEGTLLLILE (75 aa). Lysine 162 is modified (N6-lipoyllysine). Residues 250–287 enclose the Peripheral subunit-binding (PSBD) domain; that stretch reads HASPSVRKFARELGVDVSRVPGTGPKGRITQEDVQGYV. Residue histidine 526 is part of the active site.

Belongs to the 2-oxoacid dehydrogenase family. In terms of assembly, forms a 24-polypeptide structural core with octahedral symmetry. It depends on (R)-lipoate as a cofactor.

It carries out the reaction N(6)-[(R)-dihydrolipoyl]-L-lysyl-[protein] + acetyl-CoA = N(6)-[(R)-S(8)-acetyldihydrolipoyl]-L-lysyl-[protein] + CoA. In terms of biological role, the pyruvate dehydrogenase complex catalyzes the overall conversion of pyruvate to acetyl-CoA and CO(2). It contains multiple copies of three enzymatic components: pyruvate dehydrogenase (E1), dihydrolipoamide acetyltransferase (E2) and lipoamide dehydrogenase (E3). In Cupriavidus necator (strain ATCC 17699 / DSM 428 / KCTC 22496 / NCIMB 10442 / H16 / Stanier 337) (Ralstonia eutropha), this protein is Dihydrolipoyllysine-residue acetyltransferase component of pyruvate dehydrogenase complex (pdhB).